Here is a 332-residue protein sequence, read N- to C-terminus: 2,3-diketo-L-gulonate reductase (332 aa).

H44 (proton donor) is an active-site residue. NAD(+) is bound by residues 168-174, 224-225, and 304-306; these read ITMVDMS, WK, and GHE.

Belongs to the LDH2/MDH2 oxidoreductase family. DlgD subfamily. As to quaternary structure, homodimer.

The protein localises to the cytoplasm. The catalysed reaction is 3-dehydro-L-gulonate + NAD(+) = 2,3-dioxo-L-gulonate + NADH + H(+). It catalyses the reaction 3-dehydro-L-gulonate + NADP(+) = 2,3-dioxo-L-gulonate + NADPH + H(+). Functionally, catalyzes the reduction of 2,3-diketo-L-gulonate in the presence of NADH, to form 3-keto-L-gulonate. The protein is 2,3-diketo-L-gulonate reductase of Escherichia coli O6:K15:H31 (strain 536 / UPEC).